Reading from the N-terminus, the 270-residue chain is Putative pyruvate, phosphate dikinase regulatory protein (270 aa).

Position 150–157 (150–157 (GPSRTSKS)) interacts with ADP.

Belongs to the pyruvate, phosphate/water dikinase regulatory protein family. PDRP subfamily.

The enzyme catalyses N(tele)-phospho-L-histidyl/L-threonyl-[pyruvate, phosphate dikinase] + ADP = N(tele)-phospho-L-histidyl/O-phospho-L-threonyl-[pyruvate, phosphate dikinase] + AMP + H(+). It catalyses the reaction N(tele)-phospho-L-histidyl/O-phospho-L-threonyl-[pyruvate, phosphate dikinase] + phosphate + H(+) = N(tele)-phospho-L-histidyl/L-threonyl-[pyruvate, phosphate dikinase] + diphosphate. Its function is as follows. Bifunctional serine/threonine kinase and phosphorylase involved in the regulation of the pyruvate, phosphate dikinase (PPDK) by catalyzing its phosphorylation/dephosphorylation. The protein is Putative pyruvate, phosphate dikinase regulatory protein of Neorickettsia sennetsu (strain ATCC VR-367 / Miyayama) (Ehrlichia sennetsu).